Here is a 443-residue protein sequence, read N- to C-terminus: Chromosome partition protein MukF (443 aa).

The segment at leucine 209–isoleucine 237 is leucine-zipper.

This sequence belongs to the MukF family. In terms of assembly, interacts, and probably forms a ternary complex, with MukE and MukB via its C-terminal region. The complex formation is stimulated by calcium or magnesium. It is required for an interaction between MukE and MukB.

It is found in the cytoplasm. The protein localises to the nucleoid. Its function is as follows. Involved in chromosome condensation, segregation and cell cycle progression. May participate in facilitating chromosome segregation by condensation DNA from both sides of a centrally located replisome during cell division. Not required for mini-F plasmid partitioning. Probably acts via its interaction with MukB and MukE. Overexpression results in anucleate cells. It has a calcium binding activity. This chain is Chromosome partition protein MukF, found in Actinobacillus pleuropneumoniae serotype 7 (strain AP76).